The sequence spans 228 residues: 2-C-methyl-D-erythritol 4-phosphate cytidylyltransferase (228 aa).

Belongs to the IspD/TarI cytidylyltransferase family. IspD subfamily.

The enzyme catalyses 2-C-methyl-D-erythritol 4-phosphate + CTP + H(+) = 4-CDP-2-C-methyl-D-erythritol + diphosphate. The protein operates within isoprenoid biosynthesis; isopentenyl diphosphate biosynthesis via DXP pathway; isopentenyl diphosphate from 1-deoxy-D-xylulose 5-phosphate: step 2/6. Catalyzes the formation of 4-diphosphocytidyl-2-C-methyl-D-erythritol from CTP and 2-C-methyl-D-erythritol 4-phosphate (MEP). This Dechloromonas aromatica (strain RCB) protein is 2-C-methyl-D-erythritol 4-phosphate cytidylyltransferase.